Consider the following 228-residue polypeptide: Probable octanoyltransferase (228 aa).

Residues serine 27 to valine 198 enclose the BPL/LPL catalytic domain. Residues arginine 65–histidine 72, serine 129–glycine 131, and glycine 142–alanine 144 each bind substrate. The Acyl-thioester intermediate role is filled by cysteine 160.

The protein belongs to the LipB family.

The protein resides in the cytoplasm. The catalysed reaction is octanoyl-[ACP] + L-lysyl-[protein] = N(6)-octanoyl-L-lysyl-[protein] + holo-[ACP] + H(+). Its pathway is protein modification; protein lipoylation via endogenous pathway; protein N(6)-(lipoyl)lysine from octanoyl-[acyl-carrier-protein]: step 1/2. Functionally, catalyzes the transfer of endogenously produced octanoic acid from octanoyl-acyl-carrier-protein onto the lipoyl domains of lipoate-dependent enzymes. Lipoyl-ACP can also act as a substrate although octanoyl-ACP is likely to be the physiological substrate. The protein is Probable octanoyltransferase of Pyrobaculum calidifontis (strain DSM 21063 / JCM 11548 / VA1).